A 109-amino-acid chain; its full sequence is Large ribosomal subunit protein uL22 (109 aa).

Belongs to the universal ribosomal protein uL22 family. Part of the 50S ribosomal subunit.

This protein binds specifically to 23S rRNA; its binding is stimulated by other ribosomal proteins, e.g. L4, L17, and L20. It is important during the early stages of 50S assembly. It makes multiple contacts with different domains of the 23S rRNA in the assembled 50S subunit and ribosome. In terms of biological role, the globular domain of the protein is located near the polypeptide exit tunnel on the outside of the subunit, while an extended beta-hairpin is found that lines the wall of the exit tunnel in the center of the 70S ribosome. In Chromobacterium violaceum (strain ATCC 12472 / DSM 30191 / JCM 1249 / CCUG 213 / NBRC 12614 / NCIMB 9131 / NCTC 9757 / MK), this protein is Large ribosomal subunit protein uL22.